Reading from the N-terminus, the 140-residue chain is Nucleoside diphosphate kinase (140 aa).

ATP is bound by residues Lys10, Phe58, Arg86, Thr92, Arg103, and Asn113. The active-site Pros-phosphohistidine intermediate is the His116.

The protein belongs to the NDK family. As to quaternary structure, homotetramer. Mg(2+) serves as cofactor.

The protein localises to the cytoplasm. The catalysed reaction is a 2'-deoxyribonucleoside 5'-diphosphate + ATP = a 2'-deoxyribonucleoside 5'-triphosphate + ADP. It carries out the reaction a ribonucleoside 5'-diphosphate + ATP = a ribonucleoside 5'-triphosphate + ADP. Major role in the synthesis of nucleoside triphosphates other than ATP. The ATP gamma phosphate is transferred to the NDP beta phosphate via a ping-pong mechanism, using a phosphorylated active-site intermediate. The protein is Nucleoside diphosphate kinase of Anaplasma phagocytophilum (strain HZ).